The primary structure comprises 85 residues: U4-theraphotoxin-Hhn1h (85 aa).

A signal peptide spans 1–22; that stretch reads MKVTLIAILTCAAVLVLHTTAA. Residues 23–48 constitute a propeptide that is removed on maturation; the sequence is EELEAESQLMEVGMPDTELAAVDEER. 3 disulfide bridges follow: Cys-52–Cys-66, Cys-56–Cys-77, and Cys-71–Cys-82.

The protein belongs to the neurotoxin 12 (Hwtx-2) family. 02 (Hwtx-2) subfamily. In terms of tissue distribution, expressed by the venom gland.

Its subcellular location is the secreted. Postsynaptic neurotoxin. This Cyriopagopus hainanus (Chinese bird spider) protein is U4-theraphotoxin-Hhn1h.